A 262-amino-acid chain; its full sequence is Hydroxyethylthiazole kinase (262 aa).

Met50 provides a ligand contact to substrate. ATP-binding residues include Arg125 and Thr171. Residue Gly198 participates in substrate binding.

Belongs to the Thz kinase family. Mg(2+) is required as a cofactor.

The enzyme catalyses 5-(2-hydroxyethyl)-4-methylthiazole + ATP = 4-methyl-5-(2-phosphooxyethyl)-thiazole + ADP + H(+). It functions in the pathway cofactor biosynthesis; thiamine diphosphate biosynthesis; 4-methyl-5-(2-phosphoethyl)-thiazole from 5-(2-hydroxyethyl)-4-methylthiazole: step 1/1. Catalyzes the phosphorylation of the hydroxyl group of 4-methyl-5-beta-hydroxyethylthiazole (THZ). This Escherichia coli O17:K52:H18 (strain UMN026 / ExPEC) protein is Hydroxyethylthiazole kinase.